Reading from the N-terminus, the 305-residue chain is Ribonuclease Z (305 aa).

Positions 61, 63, 65, 66, 141, 209, and 268 each coordinate Zn(2+). Asp65 functions as the Proton acceptor in the catalytic mechanism.

It belongs to the RNase Z family. Homodimer. Zn(2+) serves as cofactor.

It carries out the reaction Endonucleolytic cleavage of RNA, removing extra 3' nucleotides from tRNA precursor, generating 3' termini of tRNAs. A 3'-hydroxy group is left at the tRNA terminus and a 5'-phosphoryl group is left at the trailer molecule.. Functionally, zinc phosphodiesterase, which displays some tRNA 3'-processing endonuclease activity. Probably involved in tRNA maturation, by removing a 3'-trailer from precursor tRNA. The polypeptide is Ribonuclease Z (Clostridioides difficile (strain 630) (Peptoclostridium difficile)).